A 439-amino-acid polypeptide reads, in one-letter code: Skin secretory protein xP2 (439 aa).

Positions 1 to 22 are cleaved as a signal peptide; sequence MNHKLFCVHFLLLILSVCYIQG. The tract at residues 25–351 is disordered; sequence AGGEPAPAEG…VEVGPKTEDC (327 aa). 5 consecutive repeat copies span residues 26–33, 34–41, 42–51, 52–59, and 60–69. Residues 26–343 are 33 X approximate repeats of G-G(0,1)-[EV](0,1)-A-P-[A-P](1,3)-A-E; the sequence is GGEPAPAEGV…APAPAPAPVE (318 aa). A compositionally biased stretch (low complexity) spans 26-345; it reads GGEPAPAEGV…APAPAPVEVG (320 aa). The stretch at 70–77 is one 6; approximate repeat; the sequence is GAEPAPAD. Repeat copies occupy residues 78-87, 88-97, 98-107, 108-115, 116-125, 126-135, 136-145, 146-153, and 154-163. The 16; approximate repeat unit spans residues 164–173; sequence VEAPAPAPAE. 14 repeat units span residues 174–183, 184–193, 194–203, 204–215, 216–225, 226–235, 236–245, 246–255, 256–265, 266–275, 276–285, 286–293, 294–303, and 304–313. Residues 314–321 form a 31; approximate repeat; that stretch reads GGAPSPAE. One copy of the 32; approximate repeat lies at 322 to 331; it reads GGAPAAAPAE. The stretch at 332-343 is one 33; approximate repeat; sequence GGAPAPAPAPVE. P-type domains follow at residues 349–392 and 396–439; these read EDCK…FFPR and AQCL…FHQK. 6 disulfide bridges follow: C351-C377, C361-C376, C371-C388, C398-C424, C408-C423, and C418-C435.

In terms of tissue distribution, skin.

It localises to the secreted. Functionally, may act as a growth factor in the germinal layer of the epidermis. May also be involved in growth of regenerating glands and in protection of the skin from the external environment. This Xenopus laevis (African clawed frog) protein is Skin secretory protein xP2 (p2).